A 508-amino-acid chain; its full sequence is Glycerol kinase (508 aa).

Thr-14 lines the ADP pocket. 3 residues coordinate ATP: Thr-14, Thr-15, and Ser-16. Residue Thr-14 participates in sn-glycerol 3-phosphate binding. ADP is bound at residue Arg-18. Sn-glycerol 3-phosphate is bound by residues Arg-84, Glu-85, Tyr-136, and Asp-245. Glycerol contacts are provided by Arg-84, Glu-85, Tyr-136, Asp-245, and Gln-246. 2 residues coordinate ADP: Thr-267 and Gly-314. Thr-267, Gly-314, and Gln-318 together coordinate ATP. Asn-419 serves as a coordination point for ADP.

This sequence belongs to the FGGY kinase family.

It catalyses the reaction glycerol + ATP = sn-glycerol 3-phosphate + ADP + H(+). It functions in the pathway polyol metabolism; glycerol degradation via glycerol kinase pathway; sn-glycerol 3-phosphate from glycerol: step 1/1. Its activity is regulated as follows. Inhibited by fructose 1,6-bisphosphate (FBP). In terms of biological role, key enzyme in the regulation of glycerol uptake and metabolism. Catalyzes the phosphorylation of glycerol to yield sn-glycerol 3-phosphate. This is Glycerol kinase from Bordetella pertussis (strain Tohama I / ATCC BAA-589 / NCTC 13251).